An 87-amino-acid polypeptide reads, in one-letter code: Small ribosomal subunit protein uS15 (87 aa).

It belongs to the universal ribosomal protein uS15 family. As to quaternary structure, part of the 30S ribosomal subunit. Forms a bridge to the 50S subunit in the 70S ribosome, contacting the 23S rRNA.

Its function is as follows. One of the primary rRNA binding proteins, it binds directly to 16S rRNA where it helps nucleate assembly of the platform of the 30S subunit by binding and bridging several RNA helices of the 16S rRNA. Functionally, forms an intersubunit bridge (bridge B4) with the 23S rRNA of the 50S subunit in the ribosome. The protein is Small ribosomal subunit protein uS15 of Ruminiclostridium cellulolyticum (strain ATCC 35319 / DSM 5812 / JCM 6584 / H10) (Clostridium cellulolyticum).